Reading from the N-terminus, the 609-residue chain is tRNA uridine 5-carboxymethylaminomethyl modification enzyme MnmG (609 aa).

FAD-binding positions include 11-16, Val123, and Thr178; that span reads GAGHAG. NAD(+) is bound at residue 270-284; it reads GPRYCPSIEDKVVRF. Gln367 serves as a coordination point for FAD.

It belongs to the MnmG family. Homodimer. Heterotetramer of two MnmE and two MnmG subunits. The cofactor is FAD.

Its subcellular location is the cytoplasm. In terms of biological role, NAD-binding protein involved in the addition of a carboxymethylaminomethyl (cmnm) group at the wobble position (U34) of certain tRNAs, forming tRNA-cmnm(5)s(2)U34. This chain is tRNA uridine 5-carboxymethylaminomethyl modification enzyme MnmG, found in Mycoplasmopsis synoviae (strain 53) (Mycoplasma synoviae).